The primary structure comprises 695 residues: Putative ATP-dependent RNA helicase L540 (695 aa).

The Helicase ATP-binding domain maps to 53-219; the sequence is LSALENYQLV…FNSVDSTVID (167 aa). 66 to 73 contributes to the ATP binding site; sequence SSTGSGKS. The DEAH box motif lies at 164 to 167; the sequence is DEAH. The Helicase C-terminal domain maps to 247 to 434; it reads LIEDLIHQQI…GINMMNQLMD (188 aa).

This sequence belongs to the DEAD box helicase family. DEAH subfamily.

The protein resides in the virion. The enzyme catalyses ATP + H2O = ADP + phosphate + H(+). The protein is Putative ATP-dependent RNA helicase L540 of Acanthamoeba polyphaga (Amoeba).